Reading from the N-terminus, the 90-residue chain is Small ribosomal subunit protein uS17m (90 aa).

This sequence belongs to the universal ribosomal protein uS17 family. As to quaternary structure, component of the mitochondrial small ribosomal subunit (mt-SSU). Mature yeast 74S mitochondrial ribosomes consist of a small (37S) and a large (54S) subunit. The 37S small subunit contains a 15S ribosomal RNA (15S mt-rRNA) and at least 32 different proteins. The 54S large subunit contains a 21S rRNA (21S mt-rRNA) and at least 45 different proteins.

It is found in the mitochondrion. Functionally, component of the mitochondrial ribosome (mitoribosome), a dedicated translation machinery responsible for the synthesis of mitochondrial genome-encoded proteins, including at least some of the essential transmembrane subunits of the mitochondrial respiratory chain. The mitoribosomes are attached to the mitochondrial inner membrane and translation products are cotranslationally integrated into the membrane. uS17m may have a meiosis-specific role as it accumulates during the middle stage of sporulation. The polypeptide is Small ribosomal subunit protein uS17m (Schizosaccharomyces pombe (strain 972 / ATCC 24843) (Fission yeast)).